The sequence spans 78 residues: uncharacterized protein (78 aa).

2 helical membrane-spanning segments follow: residues 7-27 and 41-61; these read ICLV…FFQF and LSRI…GLLF.

The protein localises to the cell membrane. This is an uncharacterized protein from Bacillus subtilis (strain 168).